The following is a 147-amino-acid chain: uncharacterized protein (147 aa).

This is an uncharacterized protein from Ureaplasma parvum serovar 3 (strain ATCC 700970).